A 223-amino-acid polypeptide reads, in one-letter code: Phosphoribosylformylglycinamidine synthase subunit PurQ (223 aa).

Positions 4–223 (RIGVITFPGT…FQSVLSTLVS (220 aa)) constitute a Glutamine amidotransferase type-1 domain. C87 functions as the Nucleophile in the catalytic mechanism. Active-site residues include H195 and E197.

In terms of assembly, part of the FGAM synthase complex composed of 1 PurL, 1 PurQ and 2 PurS subunits.

The protein localises to the cytoplasm. The catalysed reaction is N(2)-formyl-N(1)-(5-phospho-beta-D-ribosyl)glycinamide + L-glutamine + ATP + H2O = 2-formamido-N(1)-(5-O-phospho-beta-D-ribosyl)acetamidine + L-glutamate + ADP + phosphate + H(+). It carries out the reaction L-glutamine + H2O = L-glutamate + NH4(+). It functions in the pathway purine metabolism; IMP biosynthesis via de novo pathway; 5-amino-1-(5-phospho-D-ribosyl)imidazole from N(2)-formyl-N(1)-(5-phospho-D-ribosyl)glycinamide: step 1/2. Part of the phosphoribosylformylglycinamidine synthase complex involved in the purines biosynthetic pathway. Catalyzes the ATP-dependent conversion of formylglycinamide ribonucleotide (FGAR) and glutamine to yield formylglycinamidine ribonucleotide (FGAM) and glutamate. The FGAM synthase complex is composed of three subunits. PurQ produces an ammonia molecule by converting glutamine to glutamate. PurL transfers the ammonia molecule to FGAR to form FGAM in an ATP-dependent manner. PurS interacts with PurQ and PurL and is thought to assist in the transfer of the ammonia molecule from PurQ to PurL. This chain is Phosphoribosylformylglycinamidine synthase subunit PurQ, found in Corynebacterium jeikeium (strain K411).